The following is a 310-amino-acid chain: Manganese ABC transporter substrate-binding lipoprotein PsaA (310 aa).

The signal sequence occupies residues 1 to 20 (MKKIASVLALFVALLFGLLA). Cysteine 21 is lipidated: N-palmitoyl cysteine. Residue cysteine 21 is the site of S-diacylglycerol cysteine attachment. Positions 68, 140, 206, and 281 each coordinate Mn(2+).

This sequence belongs to the bacterial solute-binding protein 9 family. Lipoprotein receptor antigen (Lrai) subfamily.

The protein resides in the cell membrane. In terms of biological role, part of the ATP-binding cassette (ABC) transport system PsaABC involved in manganese import. Binds manganese with high affinity and specificity and delivers it to the membrane permease for translocation into the cytoplasm. Also acts as an adhesin which is involved on adherence to extracellular matrix. The protein is Manganese ABC transporter substrate-binding lipoprotein PsaA of Streptococcus pneumoniae.